Here is a 1055-residue protein sequence, read N- to C-terminus: MDS1 and EVI1 complex locus protein EVI1-A (1055 aa).

C2H2-type zinc fingers lie at residues 21-48 (YRCE…VTPH), 75-97 (HECK…LLSH), and 103-125 (YKCD…QMSH). Residues 131–155 (YECENCSKQVFTDPSNLQRHIRSQH) form a C2H2-type 4; degenerate zinc finger. C2H2-type zinc fingers lie at residues 161-183 (HACS…KHIH) and 189-211 (FVCE…KRMH). Residues 218-240 (IKCKDCGQMFSTTSSLNKHRRFC) form a C2H2-type 7; atypical zinc finger. Disordered regions lie at residues 324 to 345 (PVKG…VNQP), 372 to 423 (FITE…SDKD), and 531 to 621 (VPLK…PELP). Residues 332–345 (EQSSKSQSPHVNQP) are compositionally biased toward polar residues. Residues 381–392 (RPHEKISDHSES) show a composition bias toward basic and acidic residues. Over residues 399–413 (STPSGSDLETTSGSD) the composition is skewed to polar residues. A Nuclear localization signal motif is present at residues 422 to 435 (KDKLKENGKLYKDK). Residues 531 to 566 (VPLKIEPESPKETKKVQKGKTESPFDLTTKRKEEKA) are compositionally biased toward basic and acidic residues. A CTBP-binding motif 1 motif is present at residues 554–558 (PFDLT). Positions 569 to 583 (NVPSKSGAPTSSNHD) are enriched in polar residues. Residues 585–589 (PLDLS) carry the CTBP-binding motif 2 motif. Over residues 591-601 (GSRSRAATTKQ) the composition is skewed to polar residues. Basic and acidic residues predominate over residues 602–621 (TEPRKNHIFNEKKDMDPELP). 3 C2H2-type zinc fingers span residues 734-756 (YTCR…LRTH), 762-785 (YRCK…RNIH), and 791-813 (FKCH…LKKH). Disordered stretches follow at residues 813–837 (HENG…GPIL) and 922–957 (SVDE…EDFK). The span at 816 to 827 (GNLSGTAASSPH) shows a compositional bias: polar residues. Residues 944 to 954 (DDEDDDDDEEE) are compositionally biased toward acidic residues.

As to quaternary structure, homooligomer. Interacts with ctbp. As to expression, expressed dynamically during embryonic development; in the developing pronephros, specific areas of the brain (forebrain, midbrain and hindbrain), and in the majority of the visceral arch, and head mesenchyme derived from neural crest cells. Within the pronephros, expressed in the ventroposterior region of the pronephros anlagen from stage 20 (and is absent from the splanchnic layer that forms the glomus), then expression becomes restricted to the distal tubule and duct by the tadpole stage. In adults, expressed in various tissues including kidney, lung, testis, spleen and stomach.

It is found in the nucleus. The protein resides in the nucleus speckle. Transcriptional repressor during pronephros development. Plays a role in regionalization of the pronephros; may promote formation of the distal tubule and duct over formation of the glomus and proximal tubule. This Xenopus laevis (African clawed frog) protein is MDS1 and EVI1 complex locus protein EVI1-A (mecom-a).